Here is a 249-residue protein sequence, read N- to C-terminus: MSQAAETLDGWYSLHLFYAVDWPTLRLVPDEDRIQIVQEFHDFLDKLASVRDDHNGDHALYNITGQKADILLWVLRPEMQELNSIELALNKLRIADYLVPTYSYVSIIELSNYLAGKSDEDPYENPHVKARLYPELPHSDYICFYPMNKRRNETYNWYMLSMEERQKLMYDHGMIGRKYAGKIKQFITGSVGFDDYEWGVTLFAQDPLQFKKIVYEMRFDETTARYGDFGSFFVGHVLPEETLETFFRI.

Residues Arg-131, 145 to 149 (YPMNK), His-172, and Gln-185 contribute to the Fe-coproporphyrin III site. Tyr-145 is an active-site residue.

The protein belongs to the ChdC family. Type 1 subfamily. Fe-coproporphyrin III serves as cofactor.

The catalysed reaction is Fe-coproporphyrin III + 2 H2O2 + 2 H(+) = heme b + 2 CO2 + 4 H2O. It catalyses the reaction Fe-coproporphyrin III + H2O2 + H(+) = harderoheme III + CO2 + 2 H2O. The enzyme catalyses harderoheme III + H2O2 + H(+) = heme b + CO2 + 2 H2O. The protein operates within porphyrin-containing compound metabolism; protoheme biosynthesis. Involved in coproporphyrin-dependent heme b biosynthesis. Catalyzes the decarboxylation of Fe-coproporphyrin III (coproheme) to heme b (protoheme IX), the last step of the pathway. The reaction occurs in a stepwise manner with a three-propionate intermediate. This Staphylococcus carnosus (strain TM300) protein is Coproheme decarboxylase.